A 73-amino-acid polypeptide reads, in one-letter code: UPF0235 protein LA_1736 (73 aa).

Belongs to the UPF0235 family.

The protein is UPF0235 protein LA_1736 of Leptospira interrogans serogroup Icterohaemorrhagiae serovar Lai (strain 56601).